Here is a 367-residue protein sequence, read N- to C-terminus: Glutamate 5-kinase (367 aa).

Lys10 contacts ATP. Substrate-binding residues include Asp137 and Asn149. Residues 169-170 and 211-217 contribute to the ATP site; these read TD and TGGMATK. The 79-residue stretch at 275–353 folds into the PUA domain; it reads AGEITVDDGA…QQISEILGYE (79 aa).

It belongs to the glutamate 5-kinase family.

It is found in the cytoplasm. The catalysed reaction is L-glutamate + ATP = L-glutamyl 5-phosphate + ADP. It participates in amino-acid biosynthesis; L-proline biosynthesis; L-glutamate 5-semialdehyde from L-glutamate: step 1/2. In terms of biological role, catalyzes the transfer of a phosphate group to glutamate to form L-glutamate 5-phosphate. The protein is Glutamate 5-kinase of Yersinia pestis bv. Antiqua (strain Antiqua).